We begin with the raw amino-acid sequence, 466 residues long: L-seryl-tRNA(Sec) selenium transferase (466 aa).

N6-(pyridoxal phosphate)lysine is present on lysine 292.

The protein belongs to the SelA family. The cofactor is pyridoxal 5'-phosphate.

The protein localises to the cytoplasm. It catalyses the reaction L-seryl-tRNA(Sec) + selenophosphate + H(+) = L-selenocysteinyl-tRNA(Sec) + phosphate. Its pathway is aminoacyl-tRNA biosynthesis; selenocysteinyl-tRNA(Sec) biosynthesis; selenocysteinyl-tRNA(Sec) from L-seryl-tRNA(Sec) (bacterial route): step 1/1. Functionally, converts seryl-tRNA(Sec) to selenocysteinyl-tRNA(Sec) required for selenoprotein biosynthesis. The chain is L-seryl-tRNA(Sec) selenium transferase from Rhizobium meliloti (strain 1021) (Ensifer meliloti).